A 170-amino-acid chain; its full sequence is Methanogen homoaconitase small subunit (170 aa).

Positions 26–29 match the YLRT motif; that stretch reads YLRT.

It belongs to the LeuD family. LeuD type 2 subfamily. As to quaternary structure, heterotetramer of 2 HacA and 2 HacB proteins.

The catalysed reaction is (2R)-homocitrate = (2R,3S)-homoisocitrate. The enzyme catalyses (2R)-homocitrate = cis-homoaconitate + H2O. It catalyses the reaction (2R,3S)-homoisocitrate = cis-homoaconitate + H2O. It carries out the reaction cis-(homo)2aconitate + H2O = (2R,3S)-iso(homo)2citrate. The catalysed reaction is cis-(homo)3aconitate + H2O = (2R,3S)-iso(homo)3citrate. The protein operates within organic acid metabolism; 2-oxosuberate biosynthesis. Its function is as follows. Component of a hydro-lyase with broad substrate specificity for cis-unsaturated tricarboxylic acids. Catalyzes both the reversible dehydration of (R)-homocitrate ((R)-2-hydroxybutane-1,2,4-tricarboxylate) to produce cis-homoaconitate ((Z)-but-1-ene-1,2,4-tricarboxylate), and its hydration to homoisocitrate ((1R,2S)-1-hydroxybutane-1,2,4-tricarboxylate). Is also able to hydrate the analogous longer chain substrates cis-homo(2)-aconitate, cis-homo(3)-aconitate. These reactions are part of the biosynthesis pathway of coenzyme B. This chain is Methanogen homoaconitase small subunit (hacB), found in Methanothermobacter thermautotrophicus (strain ATCC 29096 / DSM 1053 / JCM 10044 / NBRC 100330 / Delta H) (Methanobacterium thermoautotrophicum).